A 762-amino-acid polypeptide reads, in one-letter code: Endonuclease MutS2 (762 aa).

333–340 serves as a coordination point for ATP; sequence GVNAGGKT. The 75-residue stretch at 688-762 folds into the Smr domain; the sequence is LDLRGQRSEE…GGSGVKIVKL (75 aa).

This sequence belongs to the DNA mismatch repair MutS family. MutS2 subfamily. As to quaternary structure, homodimer. Binds to stalled ribosomes, contacting rRNA.

In terms of biological role, endonuclease that is involved in the suppression of homologous recombination and thus may have a key role in the control of bacterial genetic diversity. Its function is as follows. Acts as a ribosome collision sensor, splitting the ribosome into its 2 subunits. Detects stalled/collided 70S ribosomes which it binds and splits by an ATP-hydrolysis driven conformational change. Acts upstream of the ribosome quality control system (RQC), a ribosome-associated complex that mediates the extraction of incompletely synthesized nascent chains from stalled ribosomes and their subsequent degradation. Probably generates substrates for RQC. This is Endonuclease MutS2 from Helicobacter pylori (strain J99 / ATCC 700824) (Campylobacter pylori J99).